A 48-amino-acid chain; its full sequence is Putative ATP synthase protein 8-like protein (48 aa).

A helical transmembrane segment spans residues 17–37 (GFLVILLTLLLLSYAFLSMIL).

Belongs to the ATPase protein 8 family.

The protein resides in the membrane. The polypeptide is Putative ATP synthase protein 8-like protein (Eremothecium gossypii (strain ATCC 10895 / CBS 109.51 / FGSC 9923 / NRRL Y-1056) (Yeast)).